Reading from the N-terminus, the 246-residue chain is tRNA (guanine-N(1)-)-methyltransferase (246 aa).

Residues Gly117 and 137–142 (IGDYVL) each bind S-adenosyl-L-methionine.

Belongs to the RNA methyltransferase TrmD family. In terms of assembly, homodimer.

It localises to the cytoplasm. It carries out the reaction guanosine(37) in tRNA + S-adenosyl-L-methionine = N(1)-methylguanosine(37) in tRNA + S-adenosyl-L-homocysteine + H(+). Specifically methylates guanosine-37 in various tRNAs. This Acinetobacter baumannii (strain ACICU) protein is tRNA (guanine-N(1)-)-methyltransferase.